The primary structure comprises 488 residues: Serine hydroxymethyltransferase, mitochondrial (488 aa).

The N-terminal 20 residues, 1-20 (MAVLRQFVKNSYSSIPKRFY), are a transit peptide targeting the mitochondrion. Residue K265 is modified to N6-(pyridoxal phosphate)lysine.

It belongs to the SHMT family. As to quaternary structure, homotetramer. Pyridoxal 5'-phosphate serves as cofactor.

It is found in the mitochondrion. The catalysed reaction is (6R)-5,10-methylene-5,6,7,8-tetrahydrofolate + glycine + H2O = (6S)-5,6,7,8-tetrahydrofolate + L-serine. The protein operates within one-carbon metabolism; tetrahydrofolate interconversion. Its function is as follows. Interconversion of serine and glycine. This Schizosaccharomyces pombe (strain 972 / ATCC 24843) (Fission yeast) protein is Serine hydroxymethyltransferase, mitochondrial (shm2).